The sequence spans 557 residues: Organic cation/carnitine transporter 2 (557 aa).

At 1–20 the chain is on the cytoplasmic side; the sequence is MRDYDEVTAFLGEWGPFQRL. Residues 21 to 41 form a helical membrane-spanning segment; it reads IFFLLSASIIPNGFTGLSSVF. The Extracellular portion of the chain corresponds to 42–142; that stretch reads LIATPEHRCR…NLVCEDDWKA (101 aa). 3 N-linked (GlcNAc...) asparagine glycosylation sites follow: N57, N64, and N91. The chain crosses the membrane as a helical span at residues 143–163; sequence PLTISLFFVGVLLGSFISGQL. Residues 164–172 are Cytoplasmic-facing; the sequence is SDRFGRKNV. Residues 173 to 193 traverse the membrane as a helical segment; that stretch reads LFVTMGMQTGFSFLQIFSKNF. At 194–197 the chain is on the extracellular side; that stretch reads EMFV. The chain crosses the membrane as a helical span at residues 198-218; sequence VLFVLVGMGQISNYVAAFVLG. 218–225 lines the ATP pocket; it reads GTEILGKS. The Cytoplasmic segment spans residues 219–232; sequence TEILGKSVRIIFST. Residues 233–253 traverse the membrane as a helical segment; sequence LGVCIFYAFGYMVLPLFAYFI. Topologically, residues 254 to 257 are extracellular; the sequence is RDWR. Residues 258 to 278 traverse the membrane as a helical segment; that stretch reads MLLVALTMPGVLCVALWWFIP. At 279–341 the chain is on the cytoplasmic side; that stretch reads ESPRWLISQG…LDLLRTWNIR (63 aa). A helical transmembrane segment spans residues 342–362; it reads MVTIMSIMLWMTISVGYFGLS. The Extracellular portion of the chain corresponds to 363–373; that stretch reads LDTPNLHGDIF. A helical membrane pass occupies residues 374–394; that stretch reads VNCFLSAMVEVPAYVLAWLLL. Residues 395–406 are Cytoplasmic-facing; it reads QYLPRRYSMATA. A helical membrane pass occupies residues 407 to 427; the sequence is LFLGGSVLLFMQLVPPDLYYL. Residues 428 to 430 are Extracellular-facing; it reads ATV. The helical transmembrane segment at 431–451 threads the bilayer; sequence LVMVGKFGVTAAFSMVYVYTA. Over 452–462 the chain is Cytoplasmic; the sequence is ELYPTVVRNMG. The chain crosses the membrane as a helical span at residues 463–483; it reads VGVSSTASRLGSILSPYFVYL. The Extracellular portion of the chain corresponds to 484–488; the sequence is GAYDR. Y486 carries the phosphotyrosine modification. The helical transmembrane segment at 489–509 threads the bilayer; the sequence is FLPYILMGSLTILTAILTLFL. The segment at 535 to 557 is disordered; the sequence is TPSHTRMLKDGQERPTILKSTAF. Phosphothreonine is present on T550.

It belongs to the major facilitator (TC 2.A.1) superfamily. Organic cation transporter (TC 2.A.1.19) family. In terms of assembly, interacts with PDZK1. Post-translationally, glycosylated. Glycosylation affects the expression levels. Not glycosylated. As to expression, strongly expressed in kidney, skeletal muscle, heart and placenta. Primarily expressed by surface epithelial cells of the colon (at protein level). Expressed in CD68 macrophage and CD43 T-cells but not in CD20 B-cells. In testis, localized to Sertoli cell basal membranes, peritubular myoid cells and Leydig cells.

It is found in the cell membrane. The protein localises to the apical cell membrane. It localises to the basal cell membrane. Its subcellular location is the endoplasmic reticulum. The catalysed reaction is (R)-carnitine(out) + Na(+)(out) = (R)-carnitine(in) + Na(+)(in). The enzyme catalyses glycine betaine(out) + Na(+)(out) = glycine betaine(in) + Na(+)(in). It catalyses the reaction glycine betaine(out) + (R)-carnitine(in) = glycine betaine(in) + (R)-carnitine(out). It carries out the reaction O-butanoyl-(R)-carnitine(out) + Na(+)(out) = O-butanoyl-(R)-carnitine(in) + Na(+)(in). The catalysed reaction is O-acetyl-(R)-carnitine(out) + Na(+)(out) = O-acetyl-(R)-carnitine(in) + Na(+)(in). The enzyme catalyses O-propanoyl-(R)-carnitine(out) + Na(+)(out) = O-propanoyl-(R)-carnitine(in) + Na(+)(in). It catalyses the reaction (S)-carnitine(out) + Na(+)(out) = (S)-carnitine(in) + Na(+)(in). It carries out the reaction an O-acyl-(R)-carnitine(out) + Na(+)(out) = an O-acyl-(R)-carnitine(in) + Na(+)(in). The catalysed reaction is L-glutamyl-L-arginyl-glycyl-L-methionyl-L-threonine(out) + Na(+)(out) = L-glutamyl-L-arginyl-glycyl-L-methionyl-L-threonine(in) + Na(+)(in). The enzyme catalyses N,N-dimethylglycine(out) + Na(+)(out) = N,N-dimethylglycine(in) + Na(+)(in). Inhibited by emetine, quinidine and verapamil. The IC(50) of emetine is 4.2 uM. Not inhibited by valproic acid. Transport of (R)-carnitine is stimulated by cholesterol in the plasma membrane. Functionally, sodium-ion dependent, high affinity carnitine transporter. Involved in the active cellular uptake of carnitine. Transports one sodium ion with one molecule of carnitine. Also transports organic cations such as tetraethylammonium (TEA) without the involvement of sodium. Relative uptake activity ratio of carnitine to TEA is 11.3. In intestinal epithelia, transports the quorum-sensing pentapeptide CSF (competence and sporulation factor) from B.subtilis which induces cytoprotective heat shock proteins contributing to intestinal homeostasis. May also contribute to regulate the transport of organic compounds in testis across the blood-testis-barrier. Its function is as follows. Retained in the ER, unable to perform carnitine uptake. The protein is Organic cation/carnitine transporter 2 of Homo sapiens (Human).